An 84-amino-acid polypeptide reads, in one-letter code: Large ribosomal subunit protein bL27 (84 aa).

Positions 1–22 (MAHKKGASSTRNGRDSNAQRLG) are disordered. Residues 7-19 (ASSTRNGRDSNAQ) are compositionally biased toward polar residues.

It belongs to the bacterial ribosomal protein bL27 family.

This chain is Large ribosomal subunit protein bL27, found in Streptomyces avermitilis (strain ATCC 31267 / DSM 46492 / JCM 5070 / NBRC 14893 / NCIMB 12804 / NRRL 8165 / MA-4680).